The sequence spans 505 residues: Peroxisome proliferator-activated receptor gamma (505 aa).

Residue Thr-84 is glycosylated (O-linked (GlcNAc) threonine). Residue Ser-112 is modified to Phosphoserine; by MAPK. Residues 136–210 (AIECRVCGDK…VGMSHNAIRF (75 aa)) constitute a DNA-binding region (nuclear receptor). 2 NR C4-type zinc fingers span residues 139-159 (CRVC…CEGC) and 176-198 (CDLN…FQKC). The tract at residues 205-280 (HNAIRFGRMP…DKSPFVIYDM (76 aa)) is interaction with FAM120B. The 266-residue stretch at 238–503 (DLRALAKHLY…HPLLQEIYKD (266 aa)) folds into the NR LBD domain. A Glycyl lysine isopeptide (Lys-Gly) (interchain with G-Cter in ubiquitin) cross-link involves residue Lys-252. Positions 495-503 (PLLQEIYKD) match the 9aaTAD motif.

It belongs to the nuclear hormone receptor family. NR1 subfamily. As to quaternary structure, heterodimer with other nuclear receptors, such as RXRA. The heterodimer with the retinoic acid receptor RXRA is called adipocyte-specific transcription factor ARF6. Interacts with NCOA6 coactivator, leading to a strong increase in transcription of target genes. Interacts with coactivator PPARBP, leading to a mild increase in transcription of target genes. Interacts with NOCA7 in a ligand-inducible manner. Interacts with NCOA1 and NCOA2 LXXLL motifs. Interacts with ASXL1, ASXL2, DNTTIP2, FAM120B, MAP2K1/MEK1, NR0B2, PDPK1, PRDM16, PRMT2 and TGFB1I1. Interacts (when activated by agonist) with PPP5C. Interacts with HELZ2 and THRAP3; the interaction stimulates the transcriptional activity of PPARG. Interacts with PER2, the interaction is ligand dependent and blocks PPARG recruitment to target promoters. Interacts with NOCT. Interacts with FOXO1 (acetylated form). Interacts with ACTN4. Interacts (when in the liganded conformation) with GPS2. Interacts with CRY1 and CRY2 in a ligand-dependent manner. In the absence of hormonal ligand, interacts with TACC1. In macrophages, interacts with PAQR3 and STUB1; the interactions promote PPARG poylubiquitination and STUB1-mediated degradation. Post-translationally, O-GlcNAcylation at Thr-84 reduces transcriptional activity in adipocytes. In terms of processing, phosphorylated in basal conditions and dephosphorylated when treated with the ligand. May be dephosphorylated by PPP5C. The phosphorylated Ser-112 form is recognized by PER2 and repressed, dephosphorylation at Ser-112 induces adipogenic activity. Ser-112 phosphorylation levels are reduced by 65% in brown adipose tissue compared to white adipose tissue. Ubiquitinated by E3 ubiquitin-protein ligase complex containing FBXO9; leading to proteasomal degradation. Post-translationally, ubiquitinated by E3 ubiquitin-protein ligase complex containing FBXO9; leading to proteasomal degradation. Ubiquitinated at Lys-252 by TRIM55 leading to proteasomal degradation. Ubiquitinated by E3 ubiquitin-protein ligase STUB1/CHIP; leading to proteasomal degradation. As to expression, highest expression in white and brown adipose tissue. Also found in liver, skeletal muscle, heart, adrenal gland, spleen, kidney and intestine. Isoform 2 is more abundant than isoform 1 in adipose tissue.

It localises to the nucleus. Its subcellular location is the cytoplasm. With respect to regulation, PDPK1 activates its transcriptional activity independently of its kinase activity. Its function is as follows. Nuclear receptor that binds peroxisome proliferators such as hypolipidemic drugs and fatty acids. Once activated by a ligand, the nuclear receptor binds to DNA specific PPAR response elements (PPRE) and modulates the transcription of its target genes, such as acyl-CoA oxidase. It therefore controls the peroxisomal beta-oxidation pathway of fatty acids. Key regulator of adipocyte differentiation and glucose homeostasis. ARF6 acts as a key regulator of the tissue-specific adipocyte P2 (aP2) enhancer. Acts as a critical regulator of gut homeostasis by suppressing NF-kappa-B-mediated pro-inflammatory responses. Plays a role in the regulation of cardiovascular circadian rhythms by regulating the transcription of BMAL1 in the blood vessels. In Mus musculus (Mouse), this protein is Peroxisome proliferator-activated receptor gamma (Pparg).